A 121-amino-acid chain; its full sequence is Large ribosomal subunit protein uL14c (121 aa).

Belongs to the universal ribosomal protein uL14 family. Part of the 50S ribosomal subunit.

The protein localises to the plastid. It localises to the chloroplast. Binds to 23S rRNA. This chain is Large ribosomal subunit protein uL14c, found in Tetradesmus obliquus (Green alga).